Reading from the N-terminus, the 126-residue chain is Profilin-1B (126 aa).

An actin binding region spans residues 2 to 36 (SWQTYVDTNLVGTGAVTQAAILGLDGNTWATSAGF). Residue K104 is modified to N6,N6,N6-trimethyllysine.

The protein belongs to the profilin family. Occurs in many kinds of cells as a complex with monomeric actin in a 1:1 ratio.

The protein localises to the cytoplasm. It localises to the cytoskeleton. Functionally, binds to actin and affects the structure of the cytoskeleton. At high concentrations, profilin prevents the polymerization of actin, whereas it enhances it at low concentrations. By binding to PIP2, it inhibits the formation of IP3 and DG. The polypeptide is Profilin-1B (Acanthamoeba castellanii (Amoeba)).